Here is a 72-residue protein sequence, read N- to C-terminus: UPF0150 protein ssl0738 (72 aa).

Belongs to the UPF0150 family.

The polypeptide is UPF0150 protein ssl0738 (Synechocystis sp. (strain ATCC 27184 / PCC 6803 / Kazusa)).